We begin with the raw amino-acid sequence, 251 residues long: NADPH-dependent oxidoreductase (251 aa).

This sequence belongs to the flavin oxidoreductase frp family. Requires FMN as cofactor.

In terms of biological role, reduces FMN, organic nitro compounds and disulfide DTNB. Involved in maintenance of the cellular redox state and the disulfide stress response. The polypeptide is NADPH-dependent oxidoreductase (nfrA) (Staphylococcus epidermidis (strain ATCC 35984 / DSM 28319 / BCRC 17069 / CCUG 31568 / BM 3577 / RP62A)).